We begin with the raw amino-acid sequence, 852 residues long: Patatin-like phospholipase domain-containing protein CaO19.1504 (852 aa).

Positions 41-52 are enriched in low complexity; sequence ATTDITTTPIND. The interval 41 to 184 is disordered; that stretch reads ATTDITTTPI…KKTTPTSSTS (144 aa). Residues 75–95 show a composition bias toward polar residues; that stretch reads INGTVSDSSSITDEDIMNSSY. The span at 101 to 110 shows a compositional bias: low complexity; sequence SSTNLKSNST. Positions 113–122 are enriched in acidic residues; sequence DDDDDDDDDD. Composition is skewed to low complexity over residues 129–142 and 158–171; these read SGTT…SLSS and GGSR…KGSS. The chain crosses the membrane as a helical span at residues 207–227; the sequence is WPILIFVFSWIGILGIFYFMI. The PNPLA domain occupies 396 to 588; the sequence is LCLSGGACFA…RTDIPIEALN (193 aa). The short motif at 427-431 is the GXSXG element; sequence GTSGG. Catalysis depends on serine 429, which acts as the Nucleophile. The active-site Proton acceptor is aspartate 575. The disordered stretch occupies residues 800–840; the sequence is KKLLDELDNEDEEEDEEEEEVDVDDDDDDDDDSLSDSFEIT. Acidic residues predominate over residues 805 to 833; sequence ELDNEDEEEDEEEEEVDVDDDDDDDDDSL.

The protein belongs to the PLPL family.

It is found in the membrane. Probable lipid hydrolase. This Candida albicans (strain SC5314 / ATCC MYA-2876) (Yeast) protein is Patatin-like phospholipase domain-containing protein CaO19.1504.